An 825-amino-acid polypeptide reads, in one-letter code: Ent-copalyl diphosphate synthase 2, chloroplastic (825 aa).

The N-terminal 70 residues, 1–70, are a transit peptide targeting the chloroplast; the sequence is MVLSSSCTTV…KGSSLTPIVR (70 aa). Lys-241 is a binding site for substrate. The DXDD motif motif lies at 373–376; sequence EVDD. Lys-459 lines the substrate pocket.

The protein belongs to the terpene synthase family. Tpsc subfamily. Mg(2+) serves as cofactor. As to expression, expressed in tassels.

The protein resides in the plastid. The protein localises to the chloroplast. The enzyme catalyses (2E,6E,10E)-geranylgeranyl diphosphate = ent-copalyl diphosphate. It participates in plant hormone biosynthesis; gibberellin biosynthesis. Its function is as follows. Involved in gibberellin biosynthesis. Catalyzes the conversion of geranylgeranyl diphosphate to the gibberellin precursor ent-copalyl diphosphate (ent-CPP). Involved in the production of antifungal dolabralexin phytoalexins in response to biotic and abiotic stresses. In response to fungal infection and in associtation with KSL4, is involved in the production dolabradiene, a type of antifungal phytoalexin. The protein is Ent-copalyl diphosphate synthase 2, chloroplastic of Zea mays (Maize).